We begin with the raw amino-acid sequence, 515 residues long: Protein disulfide-isomerase (515 aa).

The first 20 residues, 1-20 (MRSFAPWLVSLLGASAVVAA), serve as a signal peptide directing secretion. 2 consecutive Thioredoxin domains span residues 21–132 (ADTE…QSLP) and 339–470 (VLDG…ENGK). Catalysis depends on nucleophile residues cysteine 54, cysteine 57, cysteine 389, and cysteine 392. 2 cysteine pairs are disulfide-bonded: cysteine 54–cysteine 57 and cysteine 389–cysteine 392. Positions 478–515 (VASEETQEGGDVTEAAPSATEAETPAATDDEKAEHDEL) are disordered. Low complexity predominate over residues 490-504 (TEAAPSATEAETPAA). Residues 506–515 (DDEKAEHDEL) show a composition bias toward basic and acidic residues. Residues 512–515 (HDEL) carry the Prevents secretion from ER motif.

Belongs to the protein disulfide isomerase family.

The protein resides in the endoplasmic reticulum lumen. The catalysed reaction is Catalyzes the rearrangement of -S-S- bonds in proteins.. Functionally, participates in the folding of proteins containing disulfide bonds, may be involved in glycosylation, prolyl hydroxylation and triglyceride transfer. The protein is Protein disulfide-isomerase (pdiA) of Aspergillus niger.